A 390-amino-acid chain; its full sequence is Tuftelin (390 aa).

2 coiled-coil regions span residues 88–126 (DKMI…KLDR) and 162–351 (DTCI…IEKQ). Positions 358–390 (STQARAKTENPGSIRISKPPSPKPMPVIRVVET) are disordered.

The protein belongs to the tuftelin family. As to quaternary structure, interacts with TFIP11. Expressed in the epidermis (at protein level). Present in the extracellular enamel and is mainly associated with the crystal component.

Its subcellular location is the secreted. Involved in the structural organization of the epidermis. Involved in the mineralization and structural organization of enamel. This is Tuftelin (TUFT1) from Homo sapiens (Human).